Reading from the N-terminus, the 165-residue chain is Large ribosomal subunit protein uL15 (165 aa).

Over residues 1–29 the composition is skewed to basic residues; the sequence is MTSKKKRQRGSRTHGGGSHKNRRGAGHRG. 2 disordered regions span residues 1–59 and 133–165; these read MTSK…QKVQ and KVEG…ADEE. Basic and acidic residues predominate over residues 30 to 47; the sequence is GRGDAGRDKHEFHNHEPL. Over residues 154-165 the composition is skewed to acidic residues; it reads AEETEDADADEE.

It belongs to the universal ribosomal protein uL15 family. As to quaternary structure, part of the 50S ribosomal subunit. Interacts weakly with proteins L18e and L32e.

Functionally, binds to the 23S rRNA. This Haloarcula marismortui (strain ATCC 43049 / DSM 3752 / JCM 8966 / VKM B-1809) (Halobacterium marismortui) protein is Large ribosomal subunit protein uL15 (rpl15).